The sequence spans 378 residues: Chorismate synthase (378 aa).

Residues 42 to 61 (IQAELDRRRPGQSPITTPRQ) form a disordered region. Arg-49 contributes to the NADP(+) binding site. FMN is bound by residues 126–128 (RAS), Gly-287, 302–306 (KPTAT), and Arg-328.

The protein belongs to the chorismate synthase family. In terms of assembly, homotetramer. FMNH2 is required as a cofactor.

The catalysed reaction is 5-O-(1-carboxyvinyl)-3-phosphoshikimate = chorismate + phosphate. It functions in the pathway metabolic intermediate biosynthesis; chorismate biosynthesis; chorismate from D-erythrose 4-phosphate and phosphoenolpyruvate: step 7/7. In terms of biological role, catalyzes the anti-1,4-elimination of the C-3 phosphate and the C-6 proR hydrogen from 5-enolpyruvylshikimate-3-phosphate (EPSP) to yield chorismate, which is the branch point compound that serves as the starting substrate for the three terminal pathways of aromatic amino acid biosynthesis. This reaction introduces a second double bond into the aromatic ring system. The chain is Chorismate synthase from Synechococcus sp. (strain JA-2-3B'a(2-13)) (Cyanobacteria bacterium Yellowstone B-Prime).